A 1281-amino-acid polypeptide reads, in one-letter code: MDGQQLRSSESPASGGGGVTGGGAPHLFHALGPALLISIGYIDLGKWVAAVEAGSRFGLDLVLLALLFNFMAILCQYLAACIGTVTGRSLAEICHQEYSRPTCIFLGVQAGLSLLTSELTMIFGIALGFNLLFEYDDLITGICFATVVPNLLPYAISHLGKKMVGTLNACIAGFALLCYVLGLLVSQPQIPLTTNVIFPKLSGESAYSLMALLGANVMAHNFYIHSSVVQGQKRSAFAVGALFHDHLFSVLFIFTGIFLVNHVLMNSAAADSTNTLLLTFQDVVELMNQIFVNPMAPTIFLVVLLFSSHIISLTSAIGSQVISQHLFGINLPLSGHHLILKAFAIVPALYCAKVAGAEGIYQLLIICQIIQAMLLPSSVVPLFRVASSRLIMGAHRVSLHLEILTFLAFLLMLFSNIIFMAEMLFGDSGWLNTLKGNTGSPVVFPSTVLITVACVSVAFSLYMAVTPLKSGSHEAELQQEWSVPSQKELLNTTQDREETCAGNVTYEEDQRSDVVPSPRIQPVDCLKSALDYIDSSDTAIESDHDSQHSTAHTSTAPESCHSPSFIPEESKSVVAVDWPEPLEPISNAIVAEESTVESVDSKSTGERDIEVEPALLMDNDKEAPNILESDNKPLGGNNPSCASDDGPPSLTFSRGKGSDAGNGSGSLSRLSGLGRAARRQLAAILDEFWGHLFDYHGKLTQEASSKRFDILLGLDVRTPSSTVRADSQANEIPKSPMVRDNLQGSAFLGSSRDLMSTKNEMSNLDLTYGLQMGNNIGSSAWSQGMQLPSTQLQSSSNSLLDQGARLNSNFSTPSYADNNQFYQPATIHGYQLASYLKQMNANRNPYSSMPLDPQRLPKSSASAVPTYVDSVMHARNQNLLASLGATPSQIAATSRIGTMMAERSYYVPSTLDGNENAGSSAYSKKYHSSPDISALIAASRSALLNESKLGGGTIGSQSYLSRLASERSQYTNSVARPAAPLAFDELSPPKLPGDIFSMQQSPNPSARSLWAKQPFEQLFGVSSAELTKSEFNPAGRSGGMTKDDFSYKESEAKLLQSLRFCISKLLKLEGSGWLFKQNGGSDEDLIDQVAAVEKLLQQGTSDNQLLLGDTQQPPCDKADIQYMRVLPNCGDDCIWRASLVVSFGVWCIRRVLDLSLVESRPELWGKYTYVLNRLQGILDPAFSKPRSALSACACLHRDIRVLNSLRHSSLVATNSIPRQIRGSFTTASVVLEMIKDVETAVSGRKGRSGTAAGDVAFPKGKENLASVLKRYKRRLSSKGQQ.

Topologically, residues 1-21 (MDGQQLRSSESPASGGGGVTG) are cytoplasmic. The helical transmembrane segment at 22 to 42 (GGAPHLFHALGPALLISIGYI) threads the bilayer. At 43–61 (DLGKWVAAVEAGSRFGLDL) the chain is on the extracellular side. A helical membrane pass occupies residues 62 to 82 (VLLALLFNFMAILCQYLAACI). Topologically, residues 83 to 112 (GTVTGRSLAEICHQEYSRPTCIFLGVQAGL) are cytoplasmic. Residues 113-133 (SLLTSELTMIFGIALGFNLLF) form a helical membrane-spanning segment. Residues 134–137 (EYDD) are Extracellular-facing. A helical transmembrane segment spans residues 138 to 158 (LITGICFATVVPNLLPYAISH). The Cytoplasmic portion of the chain corresponds to 159 to 163 (LGKKM). Residues 164 to 184 (VGTLNACIAGFALLCYVLGLL) traverse the membrane as a helical segment. The Extracellular segment spans residues 185–208 (VSQPQIPLTTNVIFPKLSGESAYS). The chain crosses the membrane as a helical span at residues 209–229 (LMALLGANVMAHNFYIHSSVV). Over 230-238 (QGQKRSAFA) the chain is Cytoplasmic. The chain crosses the membrane as a helical span at residues 239–259 (VGALFHDHLFSVLFIFTGIFL). Residues 260-297 (VNHVLMNSAAADSTNTLLLTFQDVVELMNQIFVNPMAP) lie on the Extracellular side of the membrane. Residues 298-318 (TIFLVVLLFSSHIISLTSAIG) traverse the membrane as a helical segment. Over 319–325 (SQVISQH) the chain is Cytoplasmic. A helical transmembrane segment spans residues 326–346 (LFGINLPLSGHHLILKAFAIV). The Extracellular portion of the chain corresponds to 347–362 (PALYCAKVAGAEGIYQ). The chain crosses the membrane as a helical span at residues 363–383 (LLIICQIIQAMLLPSSVVPLF). Topologically, residues 384 to 400 (RVASSRLIMGAHRVSLH) are cytoplasmic. A helical transmembrane segment spans residues 401–421 (LEILTFLAFLLMLFSNIIFMA). The Extracellular portion of the chain corresponds to 422–447 (EMLFGDSGWLNTLKGNTGSPVVFPST). A helical membrane pass occupies residues 448–468 (VLITVACVSVAFSLYMAVTPL). Over 469–1281 (KSGSHEAELQ…KRRLSSKGQQ (813 aa)) the chain is Cytoplasmic. Disordered stretches follow at residues 540–565 (IESD…SPSF) and 593–665 (ESTV…NGSG). Positions 548 to 557 (HSTAHTSTAP) are enriched in polar residues. Residues 599-610 (VDSKSTGERDIE) show a composition bias toward basic and acidic residues.

This sequence belongs to the NRAMP (TC 2.A.55) family. Expressed in roots, leaf sheaths, leaf blades, flowers, developing seeds, germinating seeds and young seedlings. Expressed in adventitious roots, vascular tissues of the seminal roots, lateral roots, the connecting region between vascular tissues and lateral roots, mature leaf, mature stem, tips of adventitious roots derived from the node, shoot apex, young panicle, anthers, pistil, stigma, ovary, seed coat and fruit coat pericarp.

It localises to the membrane. Functionally, central factor in ethylene signaling pathways that control development, senescence and grain size. Acts as a positive component of the ethylene-signaling pathway. The chain is Protein ETHYLENE-INSENSITIVE 2 from Oryza sativa subsp. japonica (Rice).